The primary structure comprises 376 residues: Succinyl-diaminopimelate desuccinylase (376 aa).

His-67 is a Zn(2+) binding site. Asp-69 is a catalytic residue. Asp-100 serves as a coordination point for Zn(2+). Glu-134 functions as the Proton acceptor in the catalytic mechanism. Zn(2+)-binding residues include Glu-135, Glu-163, and His-349.

This sequence belongs to the peptidase M20A family. DapE subfamily. In terms of assembly, homodimer. Zn(2+) serves as cofactor. It depends on Co(2+) as a cofactor.

It carries out the reaction N-succinyl-(2S,6S)-2,6-diaminopimelate + H2O = (2S,6S)-2,6-diaminopimelate + succinate. It functions in the pathway amino-acid biosynthesis; L-lysine biosynthesis via DAP pathway; LL-2,6-diaminopimelate from (S)-tetrahydrodipicolinate (succinylase route): step 3/3. Catalyzes the hydrolysis of N-succinyl-L,L-diaminopimelic acid (SDAP), forming succinate and LL-2,6-diaminopimelate (DAP), an intermediate involved in the bacterial biosynthesis of lysine and meso-diaminopimelic acid, an essential component of bacterial cell walls. This Nitrosomonas europaea (strain ATCC 19718 / CIP 103999 / KCTC 2705 / NBRC 14298) protein is Succinyl-diaminopimelate desuccinylase.